The chain runs to 124 residues: Putative iron-sulfur cluster insertion protein ErpA (124 aa).

Residues cysteine 52, cysteine 116, and cysteine 118 each coordinate iron-sulfur cluster.

The protein belongs to the HesB/IscA family. As to quaternary structure, homodimer. Iron-sulfur cluster is required as a cofactor.

Its function is as follows. Required for insertion of 4Fe-4S clusters. This is Putative iron-sulfur cluster insertion protein ErpA from Delftia acidovorans (strain DSM 14801 / SPH-1).